Reading from the N-terminus, the 187-residue chain is Large ribosomal subunit protein bL9 (187 aa).

The interval 155–187 (AQRGGMVTGLREEDEEEEVEETATEEGGEETAA) is disordered. Over residues 166 to 187 (EEDEEEEVEETATEEGGEETAA) the composition is skewed to acidic residues.

It belongs to the bacterial ribosomal protein bL9 family.

In terms of biological role, binds to the 23S rRNA. This chain is Large ribosomal subunit protein bL9, found in Rhodospirillum centenum (strain ATCC 51521 / SW).